We begin with the raw amino-acid sequence, 156 residues long: Small ribosomal subunit protein uS7 (156 aa).

Belongs to the universal ribosomal protein uS7 family. Part of the 30S ribosomal subunit. Contacts proteins S9 and S11.

Its function is as follows. One of the primary rRNA binding proteins, it binds directly to 16S rRNA where it nucleates assembly of the head domain of the 30S subunit. Is located at the subunit interface close to the decoding center, probably blocks exit of the E-site tRNA. The chain is Small ribosomal subunit protein uS7 from Shewanella amazonensis (strain ATCC BAA-1098 / SB2B).